The primary structure comprises 70 residues: DNA-directed RNA polymerase subunit omega (70 aa).

It belongs to the RNA polymerase subunit omega family. In terms of assembly, the RNAP catalytic core consists of 2 alpha, 1 beta, 1 beta' and 1 omega subunit. When a sigma factor is associated with the core the holoenzyme is formed, which can initiate transcription.

The catalysed reaction is RNA(n) + a ribonucleoside 5'-triphosphate = RNA(n+1) + diphosphate. Its function is as follows. Promotes RNA polymerase assembly. Latches the N- and C-terminal regions of the beta' subunit thereby facilitating its interaction with the beta and alpha subunits. In Caldanaerobacter subterraneus subsp. tengcongensis (strain DSM 15242 / JCM 11007 / NBRC 100824 / MB4) (Thermoanaerobacter tengcongensis), this protein is DNA-directed RNA polymerase subunit omega.